Here is a 161-residue protein sequence, read N- to C-terminus: Cystatin cpi-2 (161 aa).

The first 25 residues, 1 to 25 (MMSTMSIKEGLLVILLSLFLFDTTA), serve as a signal peptide directing secretion. Residues 76 to 78 (SND) carry the Important for interaction with host LGMN motif. The N-linked (GlcNAc...) asparagine glycan is linked to Asn89. The Secondary area of contact signature appears at 93–97 (QVVAG). A disulfide bridge links Cys111 with Cys124.

It belongs to the cystatin family.

Cysteine protease inhibitor which inhibits members of the peptidase C1 family. Also acts as an asparaginyl endopeptidase inhibitor. In the human host, inhibits CTSL/cathepsin L, CTSS/cathepsin S, CTSB/cathepsin B and asparaginyl endopeptidase LGMN/AEP which may cause defects in both antigen and MHC class II invariant chain CD74/Ii processing. The chain is Cystatin cpi-2 from Brugia malayi (Filarial nematode worm).